The primary structure comprises 444 residues: N-succinylarginine dihydrolase (444 aa).

Substrate is bound by residues 19 to 28, N110, and 137 to 138; these read SGLSFGNVAS and HR. E174 is an active-site residue. R214 lines the substrate pocket. H250 is a catalytic residue. Substrate contacts are provided by D252 and N362. The Nucleophile role is filled by C368.

Belongs to the succinylarginine dihydrolase family. In terms of assembly, homodimer.

The enzyme catalyses N(2)-succinyl-L-arginine + 2 H2O + 2 H(+) = N(2)-succinyl-L-ornithine + 2 NH4(+) + CO2. It functions in the pathway amino-acid degradation; L-arginine degradation via AST pathway; L-glutamate and succinate from L-arginine: step 2/5. Functionally, catalyzes the hydrolysis of N(2)-succinylarginine into N(2)-succinylornithine, ammonia and CO(2). This is N-succinylarginine dihydrolase from Photobacterium profundum (strain SS9).